Here is a 92-residue protein sequence, read N- to C-terminus: Small ribosomal subunit protein bS18 (92 aa).

The interval 1–28 is disordered; sequence MTQQGNSGERKPRGKGPKRPRKPKVDPF. A compositionally biased stretch (basic residues) spans 12-22; the sequence is PRGKGPKRPRK.

This sequence belongs to the bacterial ribosomal protein bS18 family. In terms of assembly, part of the 30S ribosomal subunit. Forms a tight heterodimer with protein bS6.

Binds as a heterodimer with protein bS6 to the central domain of the 16S rRNA, where it helps stabilize the platform of the 30S subunit. The sequence is that of Small ribosomal subunit protein bS18 from Deinococcus radiodurans (strain ATCC 13939 / DSM 20539 / JCM 16871 / CCUG 27074 / LMG 4051 / NBRC 15346 / NCIMB 9279 / VKM B-1422 / R1).